The chain runs to 155 residues: Transcription antitermination protein NusB (155 aa).

It belongs to the NusB family.

In terms of biological role, involved in transcription antitermination. Required for transcription of ribosomal RNA (rRNA) genes. Binds specifically to the boxA antiterminator sequence of the ribosomal RNA (rrn) operons. This is Transcription antitermination protein NusB from Vibrio atlanticus (strain LGP32) (Vibrio splendidus (strain Mel32)).